Here is a 701-residue protein sequence, read N- to C-terminus: Vacuolar protein sorting-associated protein 52 B (701 aa).

2 coiled-coil regions span residues 23–45 (FEED…EECE) and 511–533 (QLDI…LAKL).

The protein belongs to the VPS52 family. As to quaternary structure, component of the Golgi-associated retrograde protein (GARP) complex. As to expression, detected in pollen.

It is found in the golgi apparatus. The protein localises to the trans-Golgi network membrane. Its subcellular location is the endosome membrane. The protein resides in the golgi apparatus membrane. Functionally, may be involved in retrograde transport of early and late endosomes to the late Golgi. This is Vacuolar protein sorting-associated protein 52 B (P2) from Arabidopsis thaliana (Mouse-ear cress).